A 64-amino-acid chain; its full sequence is Prokaryotic ubiquitin-like protein UBact (64 aa).

2 stretches are compositionally biased toward basic and acidic residues: residues 1–12 (MSDLFRMEERRQ) and 33–64 (PDVK…RSGE). The interval 1–64 (MSDLFRMEER…ARRYRQRSGE (64 aa)) is disordered. An Isoglutamyl lysine isopeptide (Glu-Lys) (interchain with K-? in acceptor proteins) cross-link involves residue glutamate 64.

Belongs to the ubiquitin-like protein UBact family.

Functionally, may function as a protein modifier covalently attached to lysine residues of substrate proteins. This may serve to target the modified proteins for degradation by proteasomes. The protein is Prokaryotic ubiquitin-like protein UBact of Chthonomonas calidirosea (strain DSM 23976 / ICMP 18418 / T49).